Here is a 439-residue protein sequence, read N- to C-terminus: Tryptophan synthase beta chain 2 (439 aa).

Lys99 is modified (N6-(pyridoxal phosphate)lysine).

It belongs to the TrpB family. Tetramer of two alpha and two beta chains. Pyridoxal 5'-phosphate is required as a cofactor.

It catalyses the reaction (1S,2R)-1-C-(indol-3-yl)glycerol 3-phosphate + L-serine = D-glyceraldehyde 3-phosphate + L-tryptophan + H2O. It participates in amino-acid biosynthesis; L-tryptophan biosynthesis; L-tryptophan from chorismate: step 5/5. Functionally, the beta subunit is responsible for the synthesis of L-tryptophan from indole and L-serine. The sequence is that of Tryptophan synthase beta chain 2 (trpB2) from Corynebacterium efficiens (strain DSM 44549 / YS-314 / AJ 12310 / JCM 11189 / NBRC 100395).